Reading from the N-terminus, the 238-residue chain is Probable transglycosylase SceD 1 (238 aa).

Residues 1 to 27 form the signal peptide; it reads MKKTVVASTLAVGLGVTGFAAGNSADA. A compositionally biased stretch (polar residues) spans 87-97; that stretch reads TNAPAQETAEQ. A disordered region spans residues 87–161; sequence TNAPAQETAE…SEASEGSSVN (75 aa). Low complexity predominate over residues 102-156; it reads EQPQQTEQASTEQPAQEAAPQTEETQQPQQEATTQTTSSSNESTSNESSSSEASE.

This sequence belongs to the transglycosylase family. SceD subfamily.

The protein localises to the secreted. Its function is as follows. Is able to cleave peptidoglycan and affects clumping and separation of bacterial cells. This chain is Probable transglycosylase SceD 1 (sceD1), found in Staphylococcus saprophyticus subsp. saprophyticus (strain ATCC 15305 / DSM 20229 / NCIMB 8711 / NCTC 7292 / S-41).